We begin with the raw amino-acid sequence, 504 residues long: Peroxisome proliferator-activated receptor gamma (504 aa).

At Ser111 the chain carries Phosphoserine; by MAPK. A DNA-binding region (nuclear receptor) is located at residues Ala135–Phe209. 2 NR C4-type zinc fingers span residues Cys138–Cys158 and Cys175–Cys197. The interval His204–Met279 is interaction with FAM120B. Positions Asp237–Asp502 constitute an NR LBD domain. Lys251 participates in a covalent cross-link: Glycyl lysine isopeptide (Lys-Gly) (interchain with G-Cter in ubiquitin). The 9aaTAD signature appears at Pro494–Asp502.

The protein belongs to the nuclear hormone receptor family. NR1 subfamily. As to quaternary structure, interacts with FOXO1 (acetylated form). Heterodimer with other nuclear receptors, such as RXRA. The heterodimer with the retinoic acid receptor RXRA is called adipocyte-specific transcription factor ARF6. Interacts with NCOA6 coactivator, leading to a strong increase in transcription of target genes. Interacts with coactivator PPARBP, leading to a mild increase in transcription of target genes. Interacts with NOCA7 in a ligand-inducible manner. Interacts with NCOA1 and NCOA2 LXXLL motifs. Interacts with ASXL1, ASXL2, DNTTIP2, FAM120B, MAP2K1/MEK1, NR0B2, PDPK1, PRDM16, PRMT2 and TGFB1I1. Interacts (when activated by agonist) with PPP5C. Interacts with HELZ2 and THRAP3; the interaction stimulates the transcriptional activity of PPARG. Interacts with PER2, the interaction is ligand dependent and blocks PPARG recruitment to target promoters. Interacts with NOCT. Interacts with ACTN4. Interacts (when in the liganded conformation) with GPS2. Interacts with CRY1 and CRY2 in a ligand-dependent manner. In the absence of hormonal ligand, interacts with TACC1. In macrophages, interacts with PAQR3 and STUB1; the interactions promote PPARG poylubiquitination and STUB1-mediated degradation. Post-translationally, phosphorylated at basal conditions and dephosphorylated when treated with the ligand. May be dephosphorylated by PPP5C. The phosphorylated form may be inactive and dephosphorylation induces adipogenic activity. In terms of processing, ubiquitinated by E3 ubiquitin-protein ligase complex containing FBXO9; leading to proteasomal degradation. Ubiquitinated at Lys-251 by TRIM55 leading to proteasomal degradation. Ubiquitinated by E3 ubiquitin-protein ligase STUB1/CHIP; leading to proteasomal degradation. As to expression, highest expression in adipose tissue and lower in spleen. Very low levels in kidney, intestine, lung and muscle.

It localises to the nucleus. Its subcellular location is the cytoplasm. PDPK1 activates its transcriptional activity independently of its kinase activity. In terms of biological role, nuclear receptor that binds peroxisome proliferators such as hypolipidemic drugs and fatty acids. Once activated by a ligand, the nuclear receptor binds to DNA specific PPAR response elements (PPRE) and modulates the transcription of its target genes, such as acyl-CoA oxidase. It therefore controls the peroxisomal beta-oxidation pathway of fatty acids. Key regulator of adipocyte differentiation and glucose homeostasis. ARF6 acts as a key regulator of the tissue-specific adipocyte P2 (aP2) enhancer. Acts as a critical regulator of gut homeostasis by suppressing NF-kappa-B-mediated pro-inflammatory responses. Plays a role in the regulation of cardiovascular circadian rhythms by regulating the transcription of BMAL1 in the blood vessels. The polypeptide is Peroxisome proliferator-activated receptor gamma (PPARG) (Sus scrofa (Pig)).